An 87-amino-acid chain; its full sequence is HssA/B-like protein 18 (87 aa).

It belongs to the hssA/B family.

In Dictyostelium discoideum (Social amoeba), this protein is HssA/B-like protein 18 (hssl18).